The sequence spans 497 residues: Carboxylesterase (497 aa).

The active-site Acyl-ester intermediate is Ser185. Residues Glu319 and His415 each act as charge relay system in the active site.

It belongs to the type-B carboxylesterase/lipase family.

The protein localises to the secreted. The enzyme catalyses a carboxylic ester + H2O = an alcohol + a carboxylate + H(+). This Thermobifida fusca (strain YX) protein is Carboxylesterase.